We begin with the raw amino-acid sequence, 524 residues long: Keratin, type II cytoskeletal 71 (524 aa).

Residues 1–130 (MSRQFTCKSG…DPEIQKVRAQ (130 aa)) form a head region. Residues 131 to 166 (EREQIKALNNKFASFIDKVRFLEQQNQVLQTKWELL) form a coil 1A region. The IF rod domain maps to 131–444 (EREQIKALNN…KLLESEECRM (314 aa)). Residues 167–185 (QQLDLNNCKNNLEPILEGH) are linker 1. The segment at 186–277 (ISNMRKQLET…CLFEAEMAQI (92 aa)) is coil 1B. Residues 278-301 (QSHISDMSVILSMDNNRNLDLDSI) form a linker 12 region. The coil 2 stretch occupies residues 302–440 (IDEVRAQYEE…ATYRKLLESE (139 aa)). The tract at residues 441–524 (ECRMSGEYSS…LSTPSKKGGR (84 aa)) is tail. The tract at residues 493 to 524 (GGENRSRGSASDYKDTLTKGSSLSTPSKKGGR) is disordered. Basic and acidic residues predominate over residues 494-509 (GENRSRGSASDYKDTL). Positions 510 to 524 (TKGSSLSTPSKKGGR) are enriched in polar residues.

It belongs to the intermediate filament family. In terms of assembly, heterodimer of a type I and a type II keratin. Associates with KRT16 and/or KRT17. Specifically expressed in the inner root sheath (IRS) of the hair follicle. Present in Henle and the Huxley layers of the IRS, while expression in the cuticle is unsure (at protein level).

Its subcellular location is the cytoplasm. It localises to the cytoskeleton. Plays a central role in hair formation. Essential component of keratin intermediate filaments in the inner root sheath (IRS) of the hair follicle. The sequence is that of Keratin, type II cytoskeletal 71 (Krt71) from Mus musculus (Mouse).